A 664-amino-acid chain; its full sequence is UvrABC system protein B (664 aa).

Positions 23 to 180 (EGLNRGMRFQ…EKLAKIGYQR (158 aa)) constitute a Helicase ATP-binding domain. 36-43 (GVTGSGKT) is a binding site for ATP. Residues 89 to 112 (YYDYYQPEAYIPTKDLYIEKNADI) carry the Beta-hairpin motif. One can recognise a Helicase C-terminal domain in the interval 426 to 588 (QVDDLINEIV…ITPRSIVKPL (163 aa)). The region spanning 622–657 (EEYVALLEEEMYRAASELRYEDAAALRDELFRVKET) is the UVR domain.

It belongs to the UvrB family. As to quaternary structure, forms a heterotetramer with UvrA during the search for lesions. Interacts with UvrC in an incision complex.

It localises to the cytoplasm. Its function is as follows. The UvrABC repair system catalyzes the recognition and processing of DNA lesions. A damage recognition complex composed of 2 UvrA and 2 UvrB subunits scans DNA for abnormalities. Upon binding of the UvrA(2)B(2) complex to a putative damaged site, the DNA wraps around one UvrB monomer. DNA wrap is dependent on ATP binding by UvrB and probably causes local melting of the DNA helix, facilitating insertion of UvrB beta-hairpin between the DNA strands. Then UvrB probes one DNA strand for the presence of a lesion. If a lesion is found the UvrA subunits dissociate and the UvrB-DNA preincision complex is formed. This complex is subsequently bound by UvrC and the second UvrB is released. If no lesion is found, the DNA wraps around the other UvrB subunit that will check the other stand for damage. The polypeptide is UvrABC system protein B (Thermotoga neapolitana (strain ATCC 49049 / DSM 4359 / NBRC 107923 / NS-E)).